We begin with the raw amino-acid sequence, 635 residues long: Threonine--tRNA ligase (635 aa).

In terms of domain architecture, TGS spans 1–61; it reads MPIITLPDGN…EKDANIAIIT (61 aa). A catalytic region spans residues 242-533; it reads DHRKIGKQLD…LTEEYAGVYP (292 aa). Residues Cys333, His384, and His510 each contribute to the Zn(2+) site.

It belongs to the class-II aminoacyl-tRNA synthetase family. In terms of assembly, homodimer. Requires Zn(2+) as cofactor.

The protein resides in the cytoplasm. The catalysed reaction is tRNA(Thr) + L-threonine + ATP = L-threonyl-tRNA(Thr) + AMP + diphosphate + H(+). Its function is as follows. Catalyzes the attachment of threonine to tRNA(Thr) in a two-step reaction: L-threonine is first activated by ATP to form Thr-AMP and then transferred to the acceptor end of tRNA(Thr). Also edits incorrectly charged L-seryl-tRNA(Thr). The polypeptide is Threonine--tRNA ligase (Psychromonas ingrahamii (strain DSM 17664 / CCUG 51855 / 37)).